The sequence spans 219 residues: MKSVTRCIALLGGSFDPVHNGHVALADYFVALLKPDELRVIPAGNPWQKHGLQASGQDRMAMVRSAFSTQKVTVNIDQQEILRPSATYTIDTLRAIRQELGPHASIVFLMGADQLQHLNTWQEWQHMFDYAHICAASRPGFAMDAAHIPTEVAQEFTRRTGTPEQIRTTPQGLAYLAPNLAVDISATAIRAALQRGERPTSQLPLGVLDYIEQHHLYKS.

The protein belongs to the NadD family.

The catalysed reaction is nicotinate beta-D-ribonucleotide + ATP + H(+) = deamido-NAD(+) + diphosphate. Its pathway is cofactor biosynthesis; NAD(+) biosynthesis; deamido-NAD(+) from nicotinate D-ribonucleotide: step 1/1. Catalyzes the reversible adenylation of nicotinate mononucleotide (NaMN) to nicotinic acid adenine dinucleotide (NaAD). This Herminiimonas arsenicoxydans protein is Probable nicotinate-nucleotide adenylyltransferase.